The chain runs to 234 residues: 2-C-methyl-D-erythritol 4-phosphate cytidylyltransferase (234 aa).

This sequence belongs to the IspD/TarI cytidylyltransferase family. IspD subfamily.

It carries out the reaction 2-C-methyl-D-erythritol 4-phosphate + CTP + H(+) = 4-CDP-2-C-methyl-D-erythritol + diphosphate. Its pathway is isoprenoid biosynthesis; isopentenyl diphosphate biosynthesis via DXP pathway; isopentenyl diphosphate from 1-deoxy-D-xylulose 5-phosphate: step 2/6. In terms of biological role, catalyzes the formation of 4-diphosphocytidyl-2-C-methyl-D-erythritol from CTP and 2-C-methyl-D-erythritol 4-phosphate (MEP). This is 2-C-methyl-D-erythritol 4-phosphate cytidylyltransferase from Desulforamulus reducens (strain ATCC BAA-1160 / DSM 100696 / MI-1) (Desulfotomaculum reducens).